The following is a 154-amino-acid chain: Ribosome maturation factor RimP (154 aa).

The protein belongs to the RimP family.

It is found in the cytoplasm. Required for maturation of 30S ribosomal subunits. This is Ribosome maturation factor RimP from Clostridium perfringens (strain ATCC 13124 / DSM 756 / JCM 1290 / NCIMB 6125 / NCTC 8237 / Type A).